Reading from the N-terminus, the 253-residue chain is Major prion protein (253 aa).

An N-terminal signal peptide occupies residues 1 to 22 (MANLGCWMLVLFVATWSDLGLC). The segment at 23-38 (KKRPKPGGWNTGGSRY) is interaction with ADGRG6. The interaction with GRB2, ERI3 and SYN1 stretch occupies residues 23-230 (KKRPKPGGWN…ESQAYYQRGS (208 aa)). The tract at residues 26 to 108 (PKPGGWNTGG…WNKPSKPKTN (83 aa)) is disordered. 5 repeat units span residues 51–59 (PQGGGGWGQ), 60–67 (PHGGGWGQ), 68–75 (PHGGGWGQ), 76–83 (PHGGGWGQ), and 84–91 (PHGGGWGQ). The 5 X 8 AA tandem repeats of P-H-G-G-G-W-G-Q stretch occupies residues 51-91 (PQGGGGWGQPHGGGWGQPHGGGWGQPHGGGWGQPHGGGWGQ). Positions 52-95 (QGGGGWGQPHGGGWGQPHGGGWGQPHGGGWGQPHGGGWGQGGGT) are enriched in gly residues. Residues H61, G62, G63, H69, G70, G71, H77, G78, G79, H85, G86, and G87 each contribute to the Cu(2+) site. An intrachain disulfide couples C179 to C214. N-linked (GlcNAc...) asparagine glycosylation is found at N181 and N197. Residue S230 is the site of GPI-anchor amidated serine attachment. Residues 231-253 (SMVLFSSPPVILLISFLIFLIVG) constitute a propeptide, removed in mature form.

This sequence belongs to the prion family. As to quaternary structure, monomer and homodimer. Has a tendency to aggregate into amyloid fibrils containing a cross-beta spine, formed by a steric zipper of superposed beta-strands. Soluble oligomers may represent an intermediate stage on the path to fibril formation. Copper binding may promote oligomerization. Interacts with GRB2, APP, ERI3/PRNPIP and SYN1. Mislocalized cytosolically exposed PrP interacts with MGRN1; this interaction alters MGRN1 subcellular location and causes lysosomal enlargement. Interacts with KIAA1191. Interacts with ADGRG6. The glycosylation pattern (the amount of mono-, di- and non-glycosylated forms or glycoforms) seems to differ in normal and CJD prion.

The protein resides in the cell membrane. It is found in the golgi apparatus. Its function is as follows. Its primary physiological function is unclear. May play a role in neuronal development and synaptic plasticity. May be required for neuronal myelin sheath maintenance. May promote myelin homeostasis through acting as an agonist for ADGRG6 receptor. May play a role in iron uptake and iron homeostasis. Soluble oligomers are toxic to cultured neuroblastoma cells and induce apoptosis (in vitro). Association with GPC1 (via its heparan sulfate chains) targets PRNP to lipid rafts. Also provides Cu(2+) or Zn(2+) for the ascorbate-mediated GPC1 deaminase degradation of its heparan sulfate side chains. In Homo sapiens (Human), this protein is Major prion protein (PRNP).